A 240-amino-acid polypeptide reads, in one-letter code: uncharacterized protein (240 aa).

An N-terminal signal peptide occupies residues 1–18 (MTRYTYLFILQIISCSFA). N-linked (GlcNAc...) asparagine glycosylation is present at asparagine 127. The chain crosses the membrane as a helical span at residues 215-235 (GFISSSQLPQFVYLIVFTIIG).

Its subcellular location is the membrane. This is an uncharacterized protein from Caenorhabditis elegans.